The sequence spans 493 residues: Mitochondrial distribution and morphology protein 10 (493 aa).

The protein belongs to the MDM10 family. Component of the ER-mitochondria encounter structure (ERMES) or MDM complex, composed of MMM1, MDM10, MDM12 and MDM34. Associates with the mitochondrial outer membrane sorting assembly machinery SAM(core) complex, which consists of SAM35, SAM37 and SAM50, to form a SAM(holo) complex.

Its subcellular location is the mitochondrion outer membrane. Functionally, component of the ERMES/MDM complex, which serves as a molecular tether to connect the endoplasmic reticulum and mitochondria. Components of this complex are involved in the control of mitochondrial shape and protein biogenesis and may function in phospholipid exchange. MDM10 is involved in the late assembly steps of the general translocase of the mitochondrial outer membrane (TOM complex). Functions in the TOM40-specific route of the assembly of outer membrane beta-barrel proteins, including the association of TOM40 with the receptor TOM22 and small TOM proteins. Can associate with the SAM(core) complex as well as the MDM12-MMM1 complex, both involved in late steps of the major beta-barrel assembly pathway, that is responsible for biogenesis of all outer membrane beta-barrel proteins. May act as a switch that shuttles between both complexes and channels precursor proteins into the TOM40-specific pathway. Plays a role in mitochondrial morphology and in the inheritance of mitochondria. This chain is Mitochondrial distribution and morphology protein 10, found in Saccharomyces cerevisiae (strain ATCC 204508 / S288c) (Baker's yeast).